Consider the following 513-residue polypeptide: Glutamyl-tRNA(Gln) amidotransferase subunit B, mitochondrial (513 aa).

The protein belongs to the GatB/GatE family. GatB subfamily. In terms of assembly, subunit of the heterotrimeric GatFAB amidotransferase (AdT) complex, composed of A, B and F subunits.

The protein localises to the mitochondrion. It carries out the reaction L-glutamyl-tRNA(Gln) + L-glutamine + ATP + H2O = L-glutaminyl-tRNA(Gln) + L-glutamate + ADP + phosphate + H(+). Allows the formation of correctly charged Gln-tRNA(Gln) through the transamidation of misacylated Glu-tRNA(Gln) in the mitochondria. The reaction takes place in the presence of glutamine and ATP through an activated gamma-phospho-Glu-tRNA(Gln). The polypeptide is Glutamyl-tRNA(Gln) amidotransferase subunit B, mitochondrial (Debaryomyces hansenii (strain ATCC 36239 / CBS 767 / BCRC 21394 / JCM 1990 / NBRC 0083 / IGC 2968) (Yeast)).